Here is a 165-residue protein sequence, read N- to C-terminus: MEPCRSLALLTSSLGLVSLLVAVSTNFWFAARGPGFSSHSGLWPSKDQVSVAGYIHVTQSFCILAVLWGLISTAFLVMSCIPSLSAPGRGPIVSTFMGFAGALSLIVAMTVYTIERWNQPANPQVQSFFSWSFYLGWVSTLLFLCTGGLSLGAHCTTHRPDYEAV.

The next 4 helical transmembrane spans lie at 9 to 29 (LLTSSLGLVSLLVAVSTNFWF), 61 to 81 (FCILAVLWGLISTAFLVMSCI), 92 to 112 (IVSTFMGFAGALSLIVAMTVY), and 133 to 153 (FYLGWVSTLLFLCTGGLSLGA).

Belongs to the PMP-22/EMP/MP20 family.

The protein localises to the cell membrane. It localises to the cytolytic granule membrane. Its function is as follows. Regulates cytotoxic granule exocytosis in effector lymphocytes, thus acting as a critical mediator of inflammation in a broad range of infectious and non-infectious diseases. Essential for cytotoxic degranulation of natural killer (NK) cells and CD8(+) T-cells and for the activation of CD4(+) T-cells following infection. Plays a critical role in CD8(+) T-cell and NK cell-mediated cytolysis of target cells and contributes to the cytolytic activity via the perforin/granzyme pathway by enhancing exocytosis of LAMP1-carrying lytic granules. Contributes to NK cell-mediated control of cancer metastasis. This chain is Protein NKG7 (NKG7), found in Bos taurus (Bovine).